Consider the following 585-residue polypeptide: L-gulonolactone oxidase 3 (585 aa).

An N-terminal signal peptide occupies residues 1 to 24 (MRYSHTLQQFSILSFFVTIWTVQS). Positions 51-233 (KTCHAANVTY…SKVKLSIEKA (183 aa)) constitute an FAD-binding PCMH-type domain.

The protein belongs to the oxygen-dependent FAD-linked oxidoreductase family. FAD serves as cofactor.

It is found in the vacuole. The catalysed reaction is L-gulono-1,4-lactone + O2 = L-ascorbate + H2O2 + H(+). It participates in cofactor biosynthesis; L-ascorbate biosynthesis. In terms of biological role, catalyzes the oxidation of L-gulono-1,4-lactone to ascorbic acid. L-gulono-1,4-lactone is oxidized to hydrogen peroxide and L-xylo-hexulonolactone which spontaneously isomerizes to L-ascorbate. The polypeptide is L-gulonolactone oxidase 3 (Arabidopsis thaliana (Mouse-ear cress)).